A 128-amino-acid chain; its full sequence is ADA histone acetyltransferase complex component 2 (128 aa).

It localises to the cytoplasm. Its subcellular location is the nucleus. The protein is ADA histone acetyltransferase complex component 2 (AHC2) of Saccharomyces cerevisiae (strain ATCC 204508 / S288c) (Baker's yeast).